A 972-amino-acid polypeptide reads, in one-letter code: FHF complex subunit HOOK-interacting protein 1B (972 aa).

Disordered stretches follow at residues 465–548 (APSP…GELE) and 573–644 (SAPY…SWPE). Ser-467 carries the phosphoserine modification. A compositionally biased stretch (low complexity) spans 478–501 (RGPGSPSVDSSSVTTVPRPSTPSR). Phosphoserine occurs at positions 510, 523, 529, and 533. The segment covering 523 to 535 (SPGLSASPASSPG) has biased composition (low complexity). Ser-859 and Ser-897 each carry phosphoserine.

Belongs to the FHIP family. As to quaternary structure, component of the FTS/Hook/FHIP complex (FHF complex), composed of AKTIP/FTS, FHIP1B, and one or more members of the Hook family of proteins HOOK1, HOOK2, and HOOK3. The FHF complex associates with the homotypic vesicular sorting complex (the HOPS complex).

Component of the FTS/Hook/FHIP complex (FHF complex). The FHF complex may function to promote vesicle trafficking and/or fusion via the homotypic vesicular protein sorting complex (the HOPS complex). FHF complex promotes the distribution of AP-4 complex to the perinuclear area of the cell. The protein is FHF complex subunit HOOK-interacting protein 1B of Homo sapiens (Human).